The primary structure comprises 308 residues: Probable acetylxylan esterase A (308 aa).

An N-terminal signal peptide occupies residues 1-19 (MAPFSFLLTLLLYTLSAGA). A glycan (N-linked (GlcNAc...) asparagine) is linked at Asn141. Residue Ser151 is the Charge relay system of the active site. Residue Asn193 is glycosylated (N-linked (GlcNAc...) asparagine).

This sequence belongs to the carbohydrate esterase 1 (CE1) family. AxeA subfamily. In terms of assembly, monomer.

Its subcellular location is the secreted. The enzyme catalyses Deacetylation of xylans and xylo-oligosaccharides.. It participates in glycan degradation; xylan degradation. Its function is as follows. Acetylxylan esterase involved in the hydrolysis of xylan, a major structural heterogeneous polysaccharide found in plant biomass representing the second most abundant polysaccharide in the biosphere, after cellulose. Degrades acetylated xylans by cleaving acetyl side groups from the hetero-xylan backbone. The protein is Probable acetylxylan esterase A (axeA) of Aspergillus clavatus (strain ATCC 1007 / CBS 513.65 / DSM 816 / NCTC 3887 / NRRL 1 / QM 1276 / 107).